We begin with the raw amino-acid sequence, 854 residues long: Fibroblast growth factor receptor 1 (854 aa).

Positions 1–20 (MSGLFFLLSELLILLGKINS) are cleaved as a signal peptide. Residues 21-383 (VSKKSLCHPE…NFFMNSVPLS (363 aa)) lie on the Extracellular side of the membrane. Residues 29 to 120 (PELFKIDNKL…SSVFFLINVT (92 aa)) enclose the Ig-like C2-type 1 domain. An intrachain disulfide couples Cys50 to Cys102. N-linked (GlcNAc...) asparagine glycosylation is found at Asn95, Asn99, Asn110, Asn118, Asn140, Asn175, Asn202, Asn248, Asn283, Asn317, and Asn346. Ig-like C2-type domains are found at residues 147 to 259 (PEMG…FTFT) and 268 to 369 (PHLT…LSVI). Residues Cys166 and Cys242 are joined by a disulfide bond. Cys288 and Cys353 are disulfide-bonded. Residues 384–404 (IFLVIGFFVAIILLSLIIYCF) form a helical membrane-spanning segment. The Cytoplasmic segment spans residues 405-854 (FLQYKNAVDS…SDYLEPKCLV (450 aa)). Positions 551 to 822 (KITNKKLGEG…EIVEILIDII (272 aa)) constitute a Protein kinase domain. ATP-binding positions include 557–565 (LGEGAFGMV) and Lys585. Asp689 serves as the catalytic Proton acceptor. At Tyr718 the chain carries Phosphotyrosine; by autocatalysis.

This sequence belongs to the protein kinase superfamily. Tyr protein kinase family. Fibroblast growth factor receptor subfamily. As to expression, expressed in brain, stem cells and the mesenchymal cells.

It localises to the membrane. The catalysed reaction is L-tyrosyl-[protein] + ATP = O-phospho-L-tyrosyl-[protein] + ADP + H(+). In terms of biological role, receptor for basic fibroblast growth factor. The chain is Fibroblast growth factor receptor 1 (FGFR1) from Dugesia japonica (Planarian).